A 665-amino-acid polypeptide reads, in one-letter code: Succinate dehydrogenase [ubiquinone] flavoprotein subunit A, mitochondrial (665 aa).

A mitochondrion-targeting transit peptide spans 1–45 (MALLKVAPSRLLSRALQLASRVQNCTPTVTTARRNFHFTVYGRKD). Positions 72, 75, 94, 95, and 101 each coordinate FAD. The residue at position 102 (histidine 102) is a Tele-8alpha-FAD histidine. Positions 103, 108, 224, and 278 each coordinate FAD. Oxaloacetate-binding residues include histidine 299, arginine 343, and histidine 410. Arginine 343 serves as the catalytic Proton acceptor. Residue glutamate 443 participates in FAD binding. Oxaloacetate-binding residues include arginine 454 and alanine 457. The FAD site is built by serine 459 and leucine 460.

Belongs to the FAD-dependent oxidoreductase 2 family. FRD/SDH subfamily. Component of complex II composed of four subunits: a flavoprotein (FP), an iron-sulfur protein (IP), and a cytochrome b composed of a large and a small subunit. It depends on FAD as a cofactor.

Its subcellular location is the mitochondrion inner membrane. The enzyme catalyses a ubiquinone + succinate = a ubiquinol + fumarate. It catalyses the reaction (R)-malate + a quinone = enol-oxaloacetate + a quinol. The catalysed reaction is (S)-malate + a quinone = enol-oxaloacetate + a quinol. Its pathway is carbohydrate metabolism; tricarboxylic acid cycle; fumarate from succinate (eukaryal route): step 1/1. With respect to regulation, enol-oxaloacetate inhibits the succinate dehydrogenase activity. Flavoprotein (FP) subunit of succinate dehydrogenase (SDH) that is involved in complex II of the mitochondrial electron transport chain and is responsible for transferring electrons from succinate to ubiquinone (coenzyme Q). SDH also oxidizes malate to the non-canonical enol form of oxaloacetate, enol-oxaloacetate. Enol-oxaloacetate, which is a potent inhibitor of the succinate dehydrogenase activity, is further isomerized into keto-oxaloacetate. The sequence is that of Succinate dehydrogenase [ubiquinone] flavoprotein subunit A, mitochondrial (sdha-a) from Xenopus laevis (African clawed frog).